Reading from the N-terminus, the 428-residue chain is Adenosylmethionine-8-amino-7-oxononanoate aminotransferase (428 aa).

Position 52 (W52) interacts with substrate. Pyridoxal 5'-phosphate is bound at residue 112 to 113 (GS). Y144 provides a ligand contact to substrate. D245 is a binding site for pyridoxal 5'-phosphate. The substrate site is built by K274 and G307. At K274 the chain carries N6-(pyridoxal phosphate)lysine. 308-309 (PT) is a pyridoxal 5'-phosphate binding site. R391 is a binding site for substrate.

It belongs to the class-III pyridoxal-phosphate-dependent aminotransferase family. BioA subfamily. As to quaternary structure, homodimer. Pyridoxal 5'-phosphate serves as cofactor.

The protein localises to the cytoplasm. It carries out the reaction (8S)-8-amino-7-oxononanoate + S-adenosyl-L-methionine = S-adenosyl-4-methylsulfanyl-2-oxobutanoate + (7R,8S)-7,8-diammoniononanoate. It participates in cofactor biosynthesis; biotin biosynthesis; 7,8-diaminononanoate from 8-amino-7-oxononanoate (SAM route): step 1/1. In terms of biological role, catalyzes the transfer of the alpha-amino group from S-adenosyl-L-methionine (SAM) to 7-keto-8-aminopelargonic acid (KAPA) to form 7,8-diaminopelargonic acid (DAPA). It is the only aminotransferase known to utilize SAM as an amino donor. The sequence is that of Adenosylmethionine-8-amino-7-oxononanoate aminotransferase from Buchnera aphidicola subsp. Acyrthosiphon pisum (strain APS) (Acyrthosiphon pisum symbiotic bacterium).